A 361-amino-acid chain; its full sequence is MSKSKFTKIIVVICIAAMFITGTSILSFAEDGTVQQSNVQIVRFDADSYNITPNQSVTISWKVLNADKVEITNMAGQGLSHEGSLEVWLMETTTFTLKAYDANGEVTSRSITVNLEHLEIKKFTVSRNEISAGETVELSWDVSGATDVSIPELTEKDLPTFESIQIQPLKTTTYTLTAYGLDGGVVKGEVTVKVNEPEITDFSADKYELDPGDSATLSWNAPGFQTIKIVGLEDEGHLPLTGTLKVSPQQTTTYTLEATTYDGIVKSKQITVKVKKPVITSFTVDKPSITKGEMFKLSWTSEYADHCYLTTNYGNKLLNRQPNGGITVASSRDITFELTAVDKYGNEVKSKIEIKVSTGVN.

A signal peptide spans 1 to 28 (MSKSKFTKIIVVICIAAMFITGTSILSF).

This is an uncharacterized protein from Ruminiclostridium cellulolyticum (strain ATCC 35319 / DSM 5812 / JCM 6584 / H10) (Clostridium cellulolyticum).